We begin with the raw amino-acid sequence, 197 residues long: Phosphoheptose isomerase (197 aa).

The region spanning 40–197 (CIASIAQGGK…LVEHSIFGKQ (158 aa)) is the SIS domain. 55–57 (NGG) provides a ligand contact to substrate. 2 residues coordinate Zn(2+): H64 and E68. Residues E68, 97-98 (ND), 123-125 (STS), S128, and Q175 contribute to the substrate site. Residues Q175 and H183 each coordinate Zn(2+).

This sequence belongs to the SIS family. GmhA subfamily. Homotetramer. The cofactor is Zn(2+).

The protein resides in the cytoplasm. The catalysed reaction is 2 D-sedoheptulose 7-phosphate = D-glycero-alpha-D-manno-heptose 7-phosphate + D-glycero-beta-D-manno-heptose 7-phosphate. It participates in carbohydrate biosynthesis; D-glycero-D-manno-heptose 7-phosphate biosynthesis; D-glycero-alpha-D-manno-heptose 7-phosphate and D-glycero-beta-D-manno-heptose 7-phosphate from sedoheptulose 7-phosphate: step 1/1. It functions in the pathway capsule biogenesis; capsule polysaccharide biosynthesis. Functionally, catalyzes the isomerization of sedoheptulose 7-phosphate in D-glycero-D-manno-heptose 7-phosphate. In Burkholderia mallei (strain ATCC 23344), this protein is Phosphoheptose isomerase.